A 376-amino-acid chain; its full sequence is Multiphosphoryl transfer protein (376 aa).

The PTS EIIA type-2 domain maps to 2-142 (FQLSVQDIHP…EELRALLMGE (141 aa)). Residue H62 is the Tele-phosphohistidine intermediate; for EIIA activity of the active site. H62 carries the post-translational modification Phosphohistidine; by HPr. Positions 156–284 (TLDVIASSLV…LTSDDALTDD (129 aa)) are m domain. Positions 285-375 (VLSAEFVVRN…DAIAAGLGEG (91 aa)) constitute an HPr domain. H299 serves as the catalytic Pros-phosphohistidine intermediate; for HPr activity. Residue H299 is modified to Phosphohistidine; by EI.

It is found in the cytoplasm. The phosphoenolpyruvate-dependent sugar phosphotransferase system (sugar PTS), a major carbohydrate active transport system, catalyzes the phosphorylation of incoming sugar substrates concomitantly with their translocation across the cell membrane. The enzyme II FruAB PTS system is involved in fructose transport. This is Multiphosphoryl transfer protein (fruB) from Salmonella typhi.